A 914-amino-acid chain; its full sequence is Polyribonucleotide nucleotidyltransferase (914 aa).

Residues 407-427 are disordered; it reads YMHNYEMPPYSTGETGRVGSP. Mg(2+) contacts are provided by Asp521 and Asp527. The 60-residue stretch at 587–646 folds into the KH domain; the sequence is PRIITTSVPVEKIGEVIGPKGKMINQIQEDTGAEIAIEDDGTVFISSEGGEAAKKAKSII. One can recognise an S1 motif domain in the interval 658–730; sequence GETYNGKVVK…DRGKISLAIP (73 aa). Positions 727-914 are disordered; sequence LAIPGFEDQE…VRRDFDPFED (188 aa). 3 stretches are compositionally biased toward basic and acidic residues: residues 742–789, 797–865, and 873–899; these read SRGD…RRSD, DRPR…DRRG, and RGSD…ERTE.

Belongs to the polyribonucleotide nucleotidyltransferase family. Requires Mg(2+) as cofactor.

Its subcellular location is the cytoplasm. It carries out the reaction RNA(n+1) + phosphate = RNA(n) + a ribonucleoside 5'-diphosphate. In terms of biological role, involved in mRNA degradation. Catalyzes the phosphorolysis of single-stranded polyribonucleotides processively in the 3'- to 5'-direction. The protein is Polyribonucleotide nucleotidyltransferase of Bifidobacterium longum subsp. infantis (strain ATCC 15697 / DSM 20088 / JCM 1222 / NCTC 11817 / S12).